A 147-amino-acid polypeptide reads, in one-letter code: Hemoglobin subunit delta (147 aa).

Positions 3–147 constitute a Globin domain; that stretch reads HLTADEKAAV…VAAALAHKYH (145 aa). The heme b site is built by His-64 and His-93.

It belongs to the globin family. In terms of assembly, heterotetramer of two delta chains and two alpha chains. Red blood cells.

This is Hemoglobin subunit delta (HBD) from Carlito syrichta (Philippine tarsier).